A 266-amino-acid polypeptide reads, in one-letter code: 22 kDa alpha-zein 8 (266 aa).

The N-terminal stretch at M1–A21 is a signal peptide.

It belongs to the zein family.

In terms of biological role, zeins are major seed storage proteins. The protein is 22 kDa alpha-zein 8 of Zea mays (Maize).